The following is a 154-amino-acid chain: MSNHMLVERVLKLIKPIVDNLNFELYHLEFKREGNNNYLRIFIDKEEGNISLEDCEAVSRAVSDILDREDPIRDPYYLEVSSPGIERTLYTHEHLKRYIGFNVIVNIQGLLKGKKKYQGKLLSFDESVLRVSCEGEEIVIPKSKISTVNLKDDL.

It belongs to the RimP family.

The protein localises to the cytoplasm. Functionally, required for maturation of 30S ribosomal subunits. The protein is Ribosome maturation factor RimP of Clostridium kluyveri (strain ATCC 8527 / DSM 555 / NBRC 12016 / NCIMB 10680 / K1).